The sequence spans 269 residues: Ribosomal RNA small subunit methyltransferase A (269 aa).

5 residues coordinate S-adenosyl-L-methionine: Ile-17, Gly-42, Glu-64, Asp-89, and Asn-109.

This sequence belongs to the class I-like SAM-binding methyltransferase superfamily. rRNA adenine N(6)-methyltransferase family. RsmA subfamily.

Its subcellular location is the cytoplasm. It carries out the reaction adenosine(1518)/adenosine(1519) in 16S rRNA + 4 S-adenosyl-L-methionine = N(6)-dimethyladenosine(1518)/N(6)-dimethyladenosine(1519) in 16S rRNA + 4 S-adenosyl-L-homocysteine + 4 H(+). In terms of biological role, specifically dimethylates two adjacent adenosines (A1518 and A1519) in the loop of a conserved hairpin near the 3'-end of 16S rRNA in the 30S particle. May play a critical role in biogenesis of 30S subunits. This chain is Ribosomal RNA small subunit methyltransferase A, found in Anaplasma phagocytophilum (strain HZ).